Here is a 274-residue protein sequence, read N- to C-terminus: MAIHLYKTSTPSTRNGTVYSQVKSNPRKNLIYGQHHCGKGRNVRGIITTRHRGGGHKRLYRKISFIRNEKYIYGRIITIEYDPNRNAYICLIHYGDGDKRYILHPRGAIIGDTLVSGTEVPIIIGNALPLTDMPLGTAIHNIEITLGKGGQLVRAAGAVAKLIAKEGKLATLKLPSGEVRLISKNCSATVGQVGNVGVNKKSLGRAGSKRWLGKRPVVRGVVMNPIDHPHGGGEGRAPIGRKKPTTPWGYPALGRRSRKINKYSDNFIVRRRSK.

Residues 224–253 (NPIDHPHGGGEGRAPIGRKKPTTPWGYPAL) are disordered.

The protein belongs to the universal ribosomal protein uL2 family. As to quaternary structure, part of the 50S ribosomal subunit.

The protein resides in the plastid. This Epifagus virginiana (Beechdrops) protein is Large ribosomal subunit protein uL2cz/uL2cy (rpl2-A).